The primary structure comprises 138 residues: Small ribosomal subunit protein uS11c (138 aa).

Residues 1 to 23 (MAKPIPRIGSRKNGRIGSRKSGR) are disordered. The segment covering 9–23 (GSRKNGRIGSRKSGR) has biased composition (basic residues).

It belongs to the universal ribosomal protein uS11 family. As to quaternary structure, part of the 30S ribosomal subunit.

The protein localises to the plastid. Its subcellular location is the chloroplast. The chain is Small ribosomal subunit protein uS11c from Buxus microphylla (Littleleaf boxwood).